Reading from the N-terminus, the 379-residue chain is Hydrogenase expression/formation protein HupD (379 aa).

Fe cation-binding residues include Cys36, Cys64, and Cys67.

It belongs to the HypD family.

In Azotobacter chroococcum mcd 1, this protein is Hydrogenase expression/formation protein HupD (hupD).